The sequence spans 260 residues: tRNA (guanine-N(1)-)-methyltransferase (260 aa).

Residues Gly117 and 137–142 (LGDFVL) contribute to the S-adenosyl-L-methionine site.

The protein belongs to the RNA methyltransferase TrmD family. Homodimer.

It localises to the cytoplasm. The catalysed reaction is guanosine(37) in tRNA + S-adenosyl-L-methionine = N(1)-methylguanosine(37) in tRNA + S-adenosyl-L-homocysteine + H(+). In terms of biological role, specifically methylates guanosine-37 in various tRNAs. The chain is tRNA (guanine-N(1)-)-methyltransferase from Cupriavidus taiwanensis (strain DSM 17343 / BCRC 17206 / CCUG 44338 / CIP 107171 / LMG 19424 / R1) (Ralstonia taiwanensis (strain LMG 19424)).